Here is a 931-residue protein sequence, read N- to C-terminus: Protocadherin gamma-A1 (931 aa).

The signal sequence occupies residues 1 to 28 (MKIQKKLTGCSRLMLLCLSLELLLEAGA). Cadherin domains lie at 29–133 (GNIH…TPQF), 134–242 (QLEE…PPAF), 243–347 (TQAQ…APEV), 348–452 (TITS…SPVF), 453–562 (HQDS…APEI), and 570–682 (DGST…EPSA). Residues 29–692 (GNIHYSVPEE…KPNDSDLTLY (664 aa)) lie on the Extracellular side of the membrane. N-linked (GlcNAc...) asparagine glycans are attached at residues Asn265, Asn419, and Asn545. An N-linked (GlcNAc...) asparagine glycan is attached at Asn685. Residues 693-713 (LVVAAAAVSCVFLAFVIVLLA) traverse the membrane as a helical segment. Residues 714–931 (HRLRRWHKSR…KKKSGKKEKK (218 aa)) lie on the Cytoplasmic side of the membrane. Disordered stretches follow at residues 801-840 (KKEPFSQQAPPNTDWRFSQAQRPGTSGSQNGDDTGTWPNN) and 901-931 (ATLTNAAGKRDGKAPAGGNGNKKKSGKKEKK). A compositionally biased stretch (polar residues) spans 805 to 840 (FSQQAPPNTDWRFSQAQRPGTSGSQNGDDTGTWPNN). Residues 921–931 (NKKKSGKKEKK) are compositionally biased toward basic residues.

Its subcellular location is the cell membrane. Its function is as follows. Potential calcium-dependent cell-adhesion protein. May be involved in the establishment and maintenance of specific neuronal connections in the brain. In Homo sapiens (Human), this protein is Protocadherin gamma-A1 (PCDHGA1).